Here is a 160-residue protein sequence, read N- to C-terminus: Outer membrane protein MT2024.1 (160 aa).

The first 22 residues, 1–22, serve as a signal peptide directing secretion; it reads MSWSRVIAYGLLPGLALALTCG.

It is found in the cell outer membrane. The polypeptide is Outer membrane protein MT2024.1 (Mycobacterium tuberculosis (strain CDC 1551 / Oshkosh)).